Reading from the N-terminus, the 83-residue chain is Small ribosomal subunit protein uS17 (83 aa).

Belongs to the universal ribosomal protein uS17 family. In terms of assembly, part of the 30S ribosomal subunit.

In terms of biological role, one of the primary rRNA binding proteins, it binds specifically to the 5'-end of 16S ribosomal RNA. This Thermodesulfovibrio yellowstonii (strain ATCC 51303 / DSM 11347 / YP87) protein is Small ribosomal subunit protein uS17.